The chain runs to 285 residues: MSAHLIDGNALAKQIRAEAAQRAARLTAAGHQPGLAVVLVGEDPASQVYVRNKVKACEDNGFYSSLNRYPADLSEADLLARIDELNNDPKIHGILVQLPLPKHIDSHKVLEAIAPEKDVDGFHVANAGALMTGAPLFRPCTPYGCMKMLESIQYPLRGARAVVVGASNIVGKPMAMMLLQAGATVTICNSKTRDLAAHTRDADVIVAAVGRRNIITADIVKPGAVVIDVGMNRDDAGKLCGDVDFAGVREVAGHITPVPGGVGPMTITMLLINTLEAAEREAGIA.

Residues 165–167 (GAS) and S190 each bind NADP(+).

The protein belongs to the tetrahydrofolate dehydrogenase/cyclohydrolase family. Homodimer.

The enzyme catalyses (6R)-5,10-methylene-5,6,7,8-tetrahydrofolate + NADP(+) = (6R)-5,10-methenyltetrahydrofolate + NADPH. It carries out the reaction (6R)-5,10-methenyltetrahydrofolate + H2O = (6R)-10-formyltetrahydrofolate + H(+). It functions in the pathway one-carbon metabolism; tetrahydrofolate interconversion. Catalyzes the oxidation of 5,10-methylenetetrahydrofolate to 5,10-methenyltetrahydrofolate and then the hydrolysis of 5,10-methenyltetrahydrofolate to 10-formyltetrahydrofolate. The chain is Bifunctional protein FolD from Cupriavidus metallidurans (strain ATCC 43123 / DSM 2839 / NBRC 102507 / CH34) (Ralstonia metallidurans).